A 457-amino-acid chain; its full sequence is Phosphoglucosamine mutase (457 aa).

The active-site Phosphoserine intermediate is the S103. 4 residues coordinate Mg(2+): S103, D245, D247, and D249. S103 is subject to Phosphoserine.

It belongs to the phosphohexose mutase family. The cofactor is Mg(2+). Post-translationally, activated by phosphorylation.

The catalysed reaction is alpha-D-glucosamine 1-phosphate = D-glucosamine 6-phosphate. Functionally, catalyzes the conversion of glucosamine-6-phosphate to glucosamine-1-phosphate. The sequence is that of Phosphoglucosamine mutase from Syntrophotalea carbinolica (strain DSM 2380 / NBRC 103641 / GraBd1) (Pelobacter carbinolicus).